Reading from the N-terminus, the 422-residue chain is Probable protein phosphatase 2C 69 (422 aa).

In terms of domain architecture, PPM-type phosphatase spans 45 to 294 (TLLLAEAGER…DDTTCIVVDI (250 aa)). D70, G71, D246, and D285 together coordinate Mn(2+).

This sequence belongs to the PP2C family. The cofactor is Mg(2+). Requires Mn(2+) as cofactor.

The enzyme catalyses O-phospho-L-seryl-[protein] + H2O = L-seryl-[protein] + phosphate. It carries out the reaction O-phospho-L-threonyl-[protein] + H2O = L-threonyl-[protein] + phosphate. The protein is Probable protein phosphatase 2C 69 of Oryza sativa subsp. japonica (Rice).